The following is a 334-amino-acid chain: 6-phosphogluconolactonase (334 aa).

This sequence belongs to the cycloisomerase 2 family.

It carries out the reaction 6-phospho-D-glucono-1,5-lactone + H2O = 6-phospho-D-gluconate + H(+). Its pathway is carbohydrate degradation; pentose phosphate pathway; D-ribulose 5-phosphate from D-glucose 6-phosphate (oxidative stage): step 2/3. Its function is as follows. Catalyzes the hydrolysis of 6-phosphogluconolactone to 6-phosphogluconate. This Yersinia pseudotuberculosis serotype O:1b (strain IP 31758) protein is 6-phosphogluconolactonase.